A 101-amino-acid chain; its full sequence is Interleukin-8 (101 aa).

Residues methionine 1–alanine 22 form the signal peptide. Cystine bridges form between cysteine 34–cysteine 61 and cysteine 36–cysteine 77.

The protein belongs to the intercrine alpha (chemokine CxC) family. Homodimer. Interacts with TNFAIP6 (via Link domain); this interaction interferes with chemokine binding to glycosaminoglycans.

The protein localises to the secreted. Its function is as follows. Chemotactic factor that mediates inflammatory response by attracting neutrophils, basophils, and T-cells to clear pathogens and protect the host from infection. Also plays an important role in neutrophil activation. Released in response to an inflammatory stimulus, exerts its effect by binding to the G-protein-coupled receptors CXCR1 and CXCR2, primarily found in neutrophils, monocytes and endothelial cells. G-protein heterotrimer (alpha, beta, gamma subunits) constitutively binds to CXCR1/CXCR2 receptor and activation by IL8 leads to beta and gamma subunits release from Galpha (GNAI2 in neutrophils) and activation of several downstream signaling pathways including PI3K and MAPK pathways. This Bos taurus (Bovine) protein is Interleukin-8 (CXCL8).